Consider the following 515-residue polypeptide: Protein disulfide-isomerase (515 aa).

The N-terminal stretch at 1-20 is a signal peptide; sequence MRTFAPWILSLLGASAVASA. 2 consecutive Thioredoxin domains span residues 21-136 and 343-470; these read ADAT…QSLP and VLDD…ENGK. Residues cysteine 58, cysteine 61, cysteine 393, and cysteine 396 each act as nucleophile in the active site. 2 cysteine pairs are disulfide-bonded: cysteine 58–cysteine 61 and cysteine 393–cysteine 396. Composition is skewed to basic and acidic residues over residues 472–496 and 506–515; these read KVDA…RAAS and SDDKSEHDEL. A disordered region spans residues 472 to 515; that stretch reads KVDALEVDPKKEQESGDATETRAASDETETPAATSDDKSEHDEL. A Prevents secretion from ER motif is present at residues 512 to 515; the sequence is HDEL.

Belongs to the protein disulfide isomerase family.

The protein resides in the endoplasmic reticulum lumen. The enzyme catalyses Catalyzes the rearrangement of -S-S- bonds in proteins.. Functionally, participates in the folding of proteins containing disulfide bonds, may be involved in glycosylation, prolyl hydroxylation and triglyceride transfer. This chain is Protein disulfide-isomerase (pdiA), found in Aspergillus oryzae (strain ATCC 42149 / RIB 40) (Yellow koji mold).